The chain runs to 220 residues: ATP-dependent Clp protease proteolytic subunit (220 aa).

S125 (nucleophile) is an active-site residue. The active site involves H150.

This sequence belongs to the peptidase S14 family. Fourteen ClpP subunits assemble into 2 heptameric rings which stack back to back to give a disk-like structure with a central cavity, resembling the structure of eukaryotic proteasomes.

It is found in the cytoplasm. The enzyme catalyses Hydrolysis of proteins to small peptides in the presence of ATP and magnesium. alpha-casein is the usual test substrate. In the absence of ATP, only oligopeptides shorter than five residues are hydrolyzed (such as succinyl-Leu-Tyr-|-NHMec, and Leu-Tyr-Leu-|-Tyr-Trp, in which cleavage of the -Tyr-|-Leu- and -Tyr-|-Trp bonds also occurs).. Functionally, cleaves peptides in various proteins in a process that requires ATP hydrolysis. Has a chymotrypsin-like activity. Plays a major role in the degradation of misfolded proteins. This chain is ATP-dependent Clp protease proteolytic subunit, found in Bacteroides fragilis (strain YCH46).